The sequence spans 553 residues: ATP synthase F(1) complex subunit alpha, mitochondrial (553 aa).

The N-terminal 43 residues, 1–43 (MLSVRVAAAVARALPRRAGLVSKNALGSSFIAARNLHASNSRL), are a transit peptide targeting the mitochondrion. Glutamine 44 bears the Pyrrolidone carboxylic acid mark. Serine 53 and serine 65 each carry phosphoserine. Serine 76 bears the Phosphoserine; alternate mark. Serine 76 carries an O-linked (GlcNAc) serine; alternate glycan. Serine 106 is modified (phosphoserine). 3 positions are modified to N6-acetyllysine: lysine 123, lysine 126, and lysine 132. Threonine 134 carries the post-translational modification Phosphothreonine. Lysine 161 carries the post-translational modification N6-acetyllysine; alternate. Residue lysine 161 is modified to N6-succinyllysine; alternate. Serine 166 is subject to Phosphoserine. Lysine 167 is modified (N6-acetyllysine; alternate). Lysine 167 carries the post-translational modification N6-succinyllysine; alternate. Serine 184 is modified (phosphoserine). The residue at position 204 (arginine 204) is an Omega-N-methylarginine. Residues glutamine 215, glycine 217, lysine 218, threonine 219, and serine 220 each contribute to the ATP site. Position 219 (threonine 219) interacts with Mg(2+). An N6-acetyllysine; alternate mark is found at lysine 230 and lysine 239. An N6-succinyllysine; alternate mark is found at lysine 230 and lysine 239. Lysine 240 is subject to N6-acetyllysine. N6-acetyllysine; alternate occurs at positions 261 and 305. N6-succinyllysine; alternate occurs at positions 261 and 305. Aspartate 312 is a Mg(2+) binding site. Residue lysine 427 is modified to N6-acetyllysine; alternate. N6-succinyllysine; alternate is present on lysine 427. An N6-acetyllysine modification is found at lysine 434. Residues glutamine 473 and glutamine 475 each coordinate ATP. An N6-acetyllysine; alternate mark is found at lysine 498, lysine 506, lysine 531, and lysine 539. N6-succinyllysine; alternate is present on residues lysine 498, lysine 506, lysine 531, and lysine 539. The residue at position 541 (lysine 541) is an N6-acetyllysine.

It belongs to the ATPase alpha/beta chains family. As to quaternary structure, homotrimer. Component of the ATP synthase complex composed at least of ATP5F1A/subunit alpha, ATP5F1B/subunit beta, ATP5MC1/subunit c (homooctomer), MT-ATP6/subunit a, MT-ATP8/subunit 8, ATP5ME/subunit e, ATP5MF/subunit f, ATP5MG/subunit g, ATP5MK/subunit k, ATP5MJ/subunit j, ATP5F1C/subunit gamma, ATP5F1D/subunit delta, ATP5F1E/subunit epsilon, ATP5PF/subunit F6, ATP5PB/subunit b, ATP5PD/subunit d, ATP5PO/subunit OSCP. ATP synthase complex consists of a soluble F(1) head domain (subunits alpha(3) and beta(3)) - the catalytic core - and a membrane F(0) domain - the membrane proton channel (subunits c, a, 8, e, f, g, k and j). These two domains are linked by a central stalk (subunits gamma, delta, and epsilon) rotating inside the F1 region and a stationary peripheral stalk (subunits F6, b, d, and OSCP). Interacts with ATPAF2. Interacts with HRG; the interaction occurs on the surface of T-cells and alters the cell morphology when associated with concanavalin (in vitro). Interacts with PLG (angiostatin peptide); the interaction inhibits most of the angiogenic properties of angiostatin. Interacts with BLOC1S1. Interacts with BCL2L1 isoform BCL-X(L); the interaction mediates the association of BCL2L1 isoform BCL-X(L) with the mitochondrial membrane F(1)F(0) ATP synthase and enhances neurons metabolic efficiency. Interacts with CLN5 and PPT1. Interacts with S100A1; this interaction increases F1-ATPase activity. Interacts with ABCB7; this interaction allows the regulation of cellular iron homeostasis and cellular reactive oxygen species (ROS) levels in cardiomyocytes. Acetylated on lysine residues. BLOC1S1 is required for acetylation. Heart muscle (at protein level). Heart and liver.

It is found in the mitochondrion inner membrane. The protein localises to the cell membrane. In terms of biological role, subunit alpha, of the mitochondrial membrane ATP synthase complex (F(1)F(0) ATP synthase or Complex V) that produces ATP from ADP in the presence of a proton gradient across the membrane which is generated by electron transport complexes of the respiratory chain. ATP synthase complex consist of a soluble F(1) head domain - the catalytic core - and a membrane F(1) domain - the membrane proton channel. These two domains are linked by a central stalk rotating inside the F(1) region and a stationary peripheral stalk. During catalysis, ATP synthesis in the catalytic domain of F(1) is coupled via a rotary mechanism of the central stalk subunits to proton translocation. In vivo, can only synthesize ATP although its ATP hydrolase activity can be activated artificially in vitro. With the catalytic subunit beta (ATP5F1B), forms the catalytic core in the F(1) domain. Subunit alpha does not bear the catalytic high-affinity ATP-binding sites. This Bos taurus (Bovine) protein is ATP synthase F(1) complex subunit alpha, mitochondrial.